A 341-amino-acid chain; its full sequence is Holliday junction branch migration complex subunit RuvB (341 aa).

The interval 1–21 (MSQPDPMLRPEPLESDGEDRA) is disordered. Positions 4 to 183 (PDPMLRPEPL…FGIPTRLQFY (180 aa)) are large ATPase domain (RuvB-L). ATP is bound by residues L22, R23, G64, K67, T68, T69, 130-132 (EDF), R173, Y183, and R220. T68 lines the Mg(2+) pocket. Residues 184-254 (TIEELDLIVT…IADSALTRLG (71 aa)) are small ATPAse domain (RuvB-S). Residues 257-341 (HLGLDTADRR…PRTQESLFDE (85 aa)) are head domain (RuvB-H). R293, R312, and R317 together coordinate DNA.

Belongs to the RuvB family. Homohexamer. Forms an RuvA(8)-RuvB(12)-Holliday junction (HJ) complex. HJ DNA is sandwiched between 2 RuvA tetramers; dsDNA enters through RuvA and exits via RuvB. An RuvB hexamer assembles on each DNA strand where it exits the tetramer. Each RuvB hexamer is contacted by two RuvA subunits (via domain III) on 2 adjacent RuvB subunits; this complex drives branch migration. In the full resolvosome a probable DNA-RuvA(4)-RuvB(12)-RuvC(2) complex forms which resolves the HJ.

The protein resides in the cytoplasm. It carries out the reaction ATP + H2O = ADP + phosphate + H(+). In terms of biological role, the RuvA-RuvB-RuvC complex processes Holliday junction (HJ) DNA during genetic recombination and DNA repair, while the RuvA-RuvB complex plays an important role in the rescue of blocked DNA replication forks via replication fork reversal (RFR). RuvA specifically binds to HJ cruciform DNA, conferring on it an open structure. The RuvB hexamer acts as an ATP-dependent pump, pulling dsDNA into and through the RuvAB complex. RuvB forms 2 homohexamers on either side of HJ DNA bound by 1 or 2 RuvA tetramers; 4 subunits per hexamer contact DNA at a time. Coordinated motions by a converter formed by DNA-disengaged RuvB subunits stimulates ATP hydrolysis and nucleotide exchange. Immobilization of the converter enables RuvB to convert the ATP-contained energy into a lever motion, pulling 2 nucleotides of DNA out of the RuvA tetramer per ATP hydrolyzed, thus driving DNA branch migration. The RuvB motors rotate together with the DNA substrate, which together with the progressing nucleotide cycle form the mechanistic basis for DNA recombination by continuous HJ branch migration. Branch migration allows RuvC to scan DNA until it finds its consensus sequence, where it cleaves and resolves cruciform DNA. The sequence is that of Holliday junction branch migration complex subunit RuvB from Paracoccus denitrificans (strain Pd 1222).